Here is a 777-residue protein sequence, read N- to C-terminus: DNA repair helicase/translocase XPB-R (777 aa).

In terms of domain architecture, Helicase ATP-binding spans 212-416; it reads AASDGALRSG…DLFHLVGPKL (205 aa). 225 to 232 contacts ATP; it reads LPCGSGKT. Positions 369–372 match the DEVH box motif; sequence DEVH. In terms of domain architecture, Helicase C-terminal spans 484–631; the sequence is IVKRHVAESS…GYTCSVTEFN (148 aa).

It belongs to the helicase family. RAD25/XPB subfamily.

The catalysed reaction is Couples ATP hydrolysis with the unwinding of duplex DNA by translocating in the 3'-5' direction.. It catalyses the reaction ATP + H2O = ADP + phosphate + H(+). ATP-dependent 3'-5' DNA helicase/translocase; binds dsDNA rather than ssDNA, unzipping it in a translocase rather than classical helicase activity. Involved in nucleotide excision repair (NER) of damaged DNA. XPB-R is a paralog of XBP, but is not a component of the TFIIH basal transcription factor and is dispensable for RNA polymerase II transcription. The chain is DNA repair helicase/translocase XPB-R from Trypanosoma brucei brucei (strain 927/4 GUTat10.1).